A 299-amino-acid polypeptide reads, in one-letter code: ATP phosphoribosyltransferase (299 aa).

The protein belongs to the ATP phosphoribosyltransferase family. Long subfamily. Mg(2+) serves as cofactor.

The protein resides in the cytoplasm. The enzyme catalyses 1-(5-phospho-beta-D-ribosyl)-ATP + diphosphate = 5-phospho-alpha-D-ribose 1-diphosphate + ATP. It participates in amino-acid biosynthesis; L-histidine biosynthesis; L-histidine from 5-phospho-alpha-D-ribose 1-diphosphate: step 1/9. With respect to regulation, feedback inhibited by histidine. In terms of biological role, catalyzes the condensation of ATP and 5-phosphoribose 1-diphosphate to form N'-(5'-phosphoribosyl)-ATP (PR-ATP). Has a crucial role in the pathway because the rate of histidine biosynthesis seems to be controlled primarily by regulation of HisG enzymatic activity. This is ATP phosphoribosyltransferase from Shewanella frigidimarina (strain NCIMB 400).